A 1311-amino-acid chain; its full sequence is DENN domain-containing protein 5B (1311 aa).

The region spanning 53–270 is the uDENN domain; the sequence is ATAAGENFDQ…EVPLPASGRS (218 aa). Over residues 154–165 the composition is skewed to polar residues; the sequence is QAEHNTSAQNCT. The interval 154-201 is disordered; the sequence is QAEHNTSAQNCTSSSSSSSSSSSSSSMDSLSSSLDDVDSPSAHGGRRT. Residues 166–187 are compositionally biased toward low complexity; the sequence is SSSSSSSSSSSSSSMDSLSSSL. The 164-residue stretch at 289–452 folds into the cDENN domain; the sequence is ELPLADFPLA…AVMSLQTSVL (164 aa). In terms of domain architecture, dDENN spans 454-619; sequence KELKSTSLRE…DNKIMSQWEE (166 aa). Positions 809–969 constitute an RUN 1 domain; it reads LEENTLIASL…DYFCFTSVFT (161 aa). Residues 854–874 are disordered; it reads EQQLESPVSNGQERRKTESSV. A helical membrane pass occupies residues 962–982; the sequence is FCFTSVFTTIMIPYRAVIIPI. One can recognise a PLAT domain in the interval 973–1081; sequence IPYRAVIIPI…DDGSLERVLI (109 aa). The region spanning 1155–1306 is the RUN 2 domain; the sequence is TVLLCGEGGL…FPITLETSLT (152 aa).

It belongs to the RAB6IP1 family.

The protein localises to the membrane. In terms of biological role, guanine nucleotide exchange factor (GEF) which may activate the small GTPases Rab. May promote the exchange of GDP to GTP, converting inactive GDP-bound Rab proteins into their active GTP-bound form. This is DENN domain-containing protein 5B (dennd5b) from Danio rerio (Zebrafish).